A 426-amino-acid polypeptide reads, in one-letter code: 26S proteasome regulatory subunit 7B (426 aa).

G209 to T216 provides a ligand contact to ATP.

It belongs to the AAA ATPase family.

It localises to the cytoplasm. It is found in the nucleus. Its function is as follows. The 26S proteasome is involved in the ATP-dependent degradation of ubiquitinated proteins. The regulatory (or ATPase) complex confers ATP dependency and substrate specificity to the 26S complex. The sequence is that of 26S proteasome regulatory subunit 7B (RPT1B) from Oryza sativa subsp. japonica (Rice).